The sequence spans 151 residues: Putative pre-16S rRNA nuclease (151 aa).

The protein belongs to the YqgF nuclease family.

It localises to the cytoplasm. Functionally, could be a nuclease involved in processing of the 5'-end of pre-16S rRNA. This Aster yellows witches'-broom phytoplasma (strain AYWB) protein is Putative pre-16S rRNA nuclease.